Here is a 194-residue protein sequence, read N- to C-terminus: E3 ubiquitin-protein ligase RNF185 (194 aa).

Residues 1–27 (MASAAASESSSSSSSSSAGAANGQSAG) are compositionally biased toward low complexity. Residues 1-32 (MASAAASESSSSSSSSSAGAANGQSAGESGGG) are disordered. Residues 31–82 (GGGAQDSTFECNICLDTSKDAVISLCGHLFCWPCLHQWLETRPNRQVCPVCK) form a required for ubiquitin ligase activity and protection against ER stress-induced cell death region. The RING-type zinc finger occupies 41 to 82 (CNICLDTSKDAVISLCGHLFCWPCLHQWLETRPNRQVCPVCK). Residues 92 to 126 (PLYGRGSTGQQDPREKTPPRPQGQRPEPENRGGFQ) are disordered. The next 2 helical transmembrane spans lie at 133–153 (GGFQ…ATAF) and 174–194 (QFLS…LLIA).

It localises to the mitochondrion outer membrane. The protein resides in the endoplasmic reticulum membrane. It catalyses the reaction S-ubiquitinyl-[E2 ubiquitin-conjugating enzyme]-L-cysteine + [acceptor protein]-L-lysine = [E2 ubiquitin-conjugating enzyme]-L-cysteine + N(6)-ubiquitinyl-[acceptor protein]-L-lysine.. It participates in protein modification; protein ubiquitination. Its function is as follows. E3 ubiquitin-protein ligase that regulates selective mitochondrial autophagy by mediating 'Lys-63'-linked polyubiquitination. Acts in the endoplasmic reticulum (ER)-associated degradation (ERAD) pathway, which targets misfolded proteins that accumulate in the endoplasmic reticulum (ER) for ubiquitination and subsequent proteasome-mediated degradation. Protects cells from ER stress-induced apoptosis. Responsible for the cotranslational ubiquitination and degradation of CFTR in the ERAD pathway. Also acts as a regulator of the innate antiviral response by catalyzing 'Lys-27'-linked polyubiquitination of CGAS, thereby promoting CGAS cyclic GMP-AMP synthase activity. Preferentially associates with the E2 enzymes UBE2J1 and UBE2J2. This is E3 ubiquitin-protein ligase RNF185 (rnf185) from Danio rerio (Zebrafish).